The chain runs to 620 residues: Sorbicillinoid biosynthetic cluster transcription factor 1 (620 aa).

The zn(2)-C6 fungal-type DNA-binding region spans 10–37; it reads CEECRRRKARCDRVRPQCGICADAGRTC. The tract at residues 285–308 is disordered; the sequence is HDDETSPNENSGSCPSVSPSTTQN. The segment covering 291 to 308 has biased composition (polar residues); it reads PNENSGSCPSVSPSTTQN.

The protein localises to the nucleus. Its function is as follows. Transcription factor that acts as the main regulator of the gene cluster that mediates the biosynthesis of sorbicillinoids, a diverse group of yellow secondary metabolites that restrict growth of competing pathogenic fungi but not of bacteria. The polypeptide is Sorbicillinoid biosynthetic cluster transcription factor 1 (Penicillium rubens (strain ATCC 28089 / DSM 1075 / NRRL 1951 / Wisconsin 54-1255) (Penicillium chrysogenum)).